The following is a 339-amino-acid chain: Dihydroorotate dehydrogenase (quinone) (339 aa).

FMN-binding positions include 62–66 and Thr86; that span reads AGMDK. Lys66 provides a ligand contact to substrate. 111-115 is a binding site for substrate; it reads NRMGF. FMN-binding residues include Asn139 and Asn172. Residue Asn172 participates in substrate binding. Residue Ser175 is the Nucleophile of the active site. Residue Asn177 participates in substrate binding. 2 residues coordinate FMN: Lys217 and Thr245. A substrate-binding site is contributed by 246–247; the sequence is NT. Residues Gly268, Gly297, and 318-319 each bind FMN; that span reads YS.

Belongs to the dihydroorotate dehydrogenase family. Type 2 subfamily. As to quaternary structure, monomer. Requires FMN as cofactor.

It localises to the cell membrane. It carries out the reaction (S)-dihydroorotate + a quinone = orotate + a quinol. Its pathway is pyrimidine metabolism; UMP biosynthesis via de novo pathway; orotate from (S)-dihydroorotate (quinone route): step 1/1. Its function is as follows. Catalyzes the conversion of dihydroorotate to orotate with quinone as electron acceptor. This Shewanella baltica (strain OS155 / ATCC BAA-1091) protein is Dihydroorotate dehydrogenase (quinone).